The following is a 316-amino-acid chain: Acetyl-coenzyme A carboxylase carboxyl transferase subunit beta, chloroplastic (316 aa).

Residues 47 to 316 enclose the CoA carboxyltransferase N-terminal domain; the sequence is LWTRCDNCEN…CKKFQNSFFK (270 aa). Residues Cys-51, Cys-54, Cys-70, and Cys-73 each contribute to the Zn(2+) site. Residues 51–73 form a C4-type zinc finger; the sequence is CDNCENMLYVRFLRQNKRICEEC.

Belongs to the AccD/PCCB family. Acetyl-CoA carboxylase is a heterohexamer composed of biotin carboxyl carrier protein, biotin carboxylase and 2 subunits each of ACCase subunit alpha and ACCase plastid-coded subunit beta (accD). The cofactor is Zn(2+).

It localises to the plastid. It is found in the chloroplast stroma. The catalysed reaction is N(6)-carboxybiotinyl-L-lysyl-[protein] + acetyl-CoA = N(6)-biotinyl-L-lysyl-[protein] + malonyl-CoA. The protein operates within lipid metabolism; malonyl-CoA biosynthesis; malonyl-CoA from acetyl-CoA: step 1/1. In terms of biological role, component of the acetyl coenzyme A carboxylase (ACC) complex. Biotin carboxylase (BC) catalyzes the carboxylation of biotin on its carrier protein (BCCP) and then the CO(2) group is transferred by the transcarboxylase to acetyl-CoA to form malonyl-CoA. The chain is Acetyl-coenzyme A carboxylase carboxyl transferase subunit beta, chloroplastic from Marchantia polymorpha (Common liverwort).